Consider the following 4249-residue polypeptide: Fibrocystin-L (4249 aa).

An N-terminal signal peptide occupies residues 1–20; the sequence is MGHLWLSGTWFLFGLLWCAA. The Extracellular segment spans residues 21–4222; that stretch reads DSHKGSSETI…TPVQTLAVIT (4202 aa). IPT/TIG domains lie at 31–132, 146–255, 270–361, 1067–1153, 1155–1234, 1240–1323, 1329–1468, 1565–1648, 1658–1742, 1748–1827, 1830–1909, 1915–1996, 1998–2084, and 2090–2175; these read PKVT…GVAS, PTIR…KMTY, PEVV…ILEY, PLIL…HFIY, SQIS…SFSY, PVVT…KLNA, LEVI…SFSY, PSII…TLTK, PNID…SFSY, PYVT…NLTI, PAVA…SFTY, PFLK…AFEY, LSIQ…LFTY, and PLIT…DFLY. The PA14 domain occupies 337–492; the sequence is PGGRGLKVEV…NVFTEQQTGD (156 aa). O-linked (GalNAc...) threonine glycosylation is found at Thr1297 and Thr1359. Residue Thr1838 is glycosylated (O-linked (GalNAc...) threonine). The G8 1 domain maps to 2183-2303; the sequence is SSWGGSPPPE…IPVVWTRLTH (121 aa). PbH1 repeat units follow at residues 2484-2506, 2507-2529, 2565-2587, 2664-2686, and 2732-2755; these read QFKS…TIHN, THHL…FIED, NPNN…WYRM, GGAL…ETKR, and SQGL…ALGV. The G8 2 domain maps to 3035-3173; the sequence is SFWQSSPENN…HSVYKTKLLE (139 aa). PbH1 repeat units follow at residues 3292–3314, 3354–3376, 3415–3437, 3470–3492, and 3493–3514; these read KGNA…RDST, TDGV…RIWG, GTNT…RIDG, PGCS…YFQT, and TESV…FSMV. The O-linked (GalNAc...) threonine glycan is linked to Thr3735. The segment at 4183–4208 is disordered; the sequence is LSAQSVPGGSGSSPGSGSSSSGHSKA. The span at 4197–4208 shows a compositional bias: low complexity; the sequence is GSGSSSSGHSKA. The helical transmembrane segment at 4223–4243 threads the bilayer; it reads ACLVGRLLLLEVFMAAVFILN. Residues 4244 to 4249 lie on the Cytoplasmic side of the membrane; that stretch reads TTVGIN.

As to expression, expressed in neurons in the hippocampus and the cerebral cortex (at protein level). Transiently expressed at high levels in inner ear hair cells, predominantly in outer hair cells, during early postnatal development (at protein level).

The protein resides in the membrane. It localises to the cell projection. It is found in the stereocilium membrane. Functionally, component of hair-cell stereocilia coat. Required for normal hearing. The protein is Fibrocystin-L (Pkhd1l1) of Mus musculus (Mouse).